We begin with the raw amino-acid sequence, 267 residues long: Dynein axonemal assembly factor 19 homolog (267 aa).

2 disordered regions span residues 86–111 and 226–250; these read ISQSQLPPTTPTEVPTTSGDFTRDWR and HQGKQEQPAAAEAPHEEGGSTVDPC.

Belongs to the DNAAF19/PR46b family. In terms of assembly, homodimer.

Its subcellular location is the cytoplasm. The protein resides in the cell projection. It localises to the cilium. It is found in the flagellum. In terms of biological role, dynein-attachment factor required for cilia motility. The protein is Dynein axonemal assembly factor 19 homolog (PR46b) of Chlamydomonas reinhardtii (Chlamydomonas smithii).